Here is a 2005-residue protein sequence, read N- to C-terminus: MAQSVLVPPGPDSFRFFTRESLAAIEQRIAEEKAKRPKQERKDEDDENGPKPNSDLEAGKSLPFIYGDIPPEMVSVPLEDLDPYYINKKTFIVLNKGKAISRFSATPALYILTPFNPIRKLAIKILVHSLFNMLIMCTILTNCVFMTMSNPPDWTKNVEYTFTGIYTFESLIKILARGFCLEDFTFLRDPWNWLDFTVITFAYVTEFVDLGNVSALRTFRVLRALKTISVIPGLKTIVGALIQSVKKLSDVMILTVFCLSVFALIGLQLFMGNLRNKCLQWPPDNSSFEINITSFFNNSLDGNGTTFNRTVSIFNWDEYIEDKSHFYFLEGQNDALLCGNSSDAGQCPEGYICVKAGRNPNYGYTSFDTFSWAFLSLFRLMTQDFWENLYQLTLRAAGKTYMIFFVLVIFLGSFYLINLILAVVAMAYEEQNQATLEEAEQKEAEFQQMLEQLKKQQEEAQAAAAAASAESRDFSGAGGIGVFSESSSVASKLSSKSEKELKNRRKKKKQKEQSGEEEKNDRVRKSESEDSIRRKGFRFSLEGSRLTYEKRFSSPHQSLLSIRGSLFSPRRNSRASLFSFRGRAKDIGSENDFADDEHSTFEDNDSRRDSLFVPHRHGERRHSNVSQASRASRVLPILPMNGKMHSAVDCNGVVSLVGGPSTLTSAGQLLPEGTTTETEIRKRRSSSYHVSMDLLEDPTSRQRAMSIASILTNTMEELEESRQKCPPCWYKFANMCLIWDCCKPWLKVKHLVNLVVMDPFVDLAITICIVLNTLFMAMEHYPMTEQFSSVLSVGNLVFTGIFTAEMFLKIIAMDPYYYFQEGWNIFDGFIVSLSLMELGLANVEGLSVLRSFRLLRVFKLAKSWPTLNMLIKIIGNSVGALGNLTLVLAIIVFIFAVVGMQLFGKSYKECVCKISNDCELPRWHMHDFFHSFLIVFRVLCGEWIETMWDCMEVAGQTMCLTVFMMVMVIGNLVVLNLFLALLLSSFSSDNLAATDDDNEMNNLQIAVGRMQKGIDFVKRKIREFIQKAFVRKQKALDEIKPLEDLNNKKDSCISNHTTIEIGKDLNYLKDGNGTTSGIGSSVEKYVVDESDYMSFINNPSLTVTVPIAVGESDFENLNTEEFSSESDMEESKEKLNATSSSEGSTVDIGAPAEGEQPEVEPEESLEPEACFTEDCVRKFKCCQISIEEGKGKLWWNLRKTCYKIVEHNWFETFIVFMILLSSGALAFEDIYIEQRKTIKTMLEYADKVFTYIFILEMLLKWVAYGFQVYFTNAWCWLDFLIVDVSLVSLTANALGYSELGAIKSLRTLRALRPLRALSRFEGMRVVVNALLGAIPSIMNVLLVCLIFWLIFSIMGVNLFAGKFYHCINYTTGEMFDVSVVNNYSECKALIESNQTARWKNVKVNFDNVGLGYLSLLQVATFKGWMDIMYAAVDSRNVELQPKYEDNLYMYLYFVIFIIFGSFFTLNLFIGVIIDNFNQQKKKFGGQDIFMTEEQKKYYNAMKKLGSKKPQKPIPRPANKFQGMVFDFVTKQVFDISIMILICLNMVTMMVETDDQSQEMTNILYWINLVFIVLFTGECVLKLISLRYYYFTIGWNIFDFVVVILSIVGMFLAELIEKYFVSPTLFRVIRLARIGRILRLIKGAKGIRTLLFALMMSLPALFNIGLLLFLVMFIYAIFGMSNFAYVKREVGIDDMFNFETFGNSMICLFQITTSAGWDGLLAPILNSGPPDCDPDKDHPGSSVKGDCGNPSVGIFFFVSYIIISFLVVVNMYIAVILENFSVATEESAEPLSEDDFEMFYEVWEKFDPDATQFIEFAKLSDFADALDPPLLIAKPNKVQLIAMDLPMVSGDRIHCLDILFAFTKRVLGESGEMDALRIQMEERFMASNPSKVSYEPITTTLKRKQEEVSAIIIQRAYRRYLLKQKVKKVSSIYKKDKGKECDGTPIKEDTLIDKLNENSTPEKTDMTPSTTSPPSYDSVTKPEKEKFEKDKSEKEDKGKDIRESKK.

Residues 1–129 (MAQSVLVPPG…KLAIKILVHS (129 aa)) lie on the Cytoplasmic side of the membrane. At Ser-4 the chain carries Phosphoserine. The tract at residues 28–61 (RIAEEKAKRPKQERKDEDDENGPKPNSDLEAGKS) is disordered. Lys-38 participates in a covalent cross-link: Glycyl lysine isopeptide (Lys-Gly) (interchain with G-Cter in SUMO1). One copy of the I repeat lies at 111–456 (ILTPFNPIRK…QQMLEQLKKQ (346 aa)). The helical transmembrane segment at 130–148 (LFNMLIMCTILTNCVFMTM) threads the bilayer. The Extracellular segment spans residues 149-155 (SNPPDWT). Residues 156 to 176 (KNVEYTFTGIYTFESLIKILA) traverse the membrane as a helical segment. Residues 177–190 (RGFCLEDFTFLRDP) lie on the Cytoplasmic side of the membrane. The helical transmembrane segment at 191-208 (WNWLDFTVITFAYVTEFV) threads the bilayer. Over 209–214 (DLGNVS) the chain is Extracellular. Asn-212 carries an N-linked (GlcNAc...) asparagine glycan. A helical transmembrane segment spans residues 215-231 (ALRTFRVLRALKTISVI). Residues 232–250 (PGLKTIVGALIQSVKKLSD) lie on the Cytoplasmic side of the membrane. The helical transmembrane segment at 251 to 270 (VMILTVFCLSVFALIGLQLF) threads the bilayer. Over 271-369 (MGNLRNKCLQ…PNYGYTSFDT (99 aa)) the chain is Extracellular. An intrachain disulfide couples Cys-278 to Cys-338. 6 N-linked (GlcNAc...) asparagine glycosylation sites follow: Asn-285, Asn-291, Asn-297, Asn-303, Asn-308, and Asn-340. The pore-forming intramembrane region spans 370 to 394 (FSWAFLSLFRLMTQDFWENLYQLTL). The Extracellular portion of the chain corresponds to 395-401 (RAAGKTY). The helical transmembrane segment at 402 to 422 (MIFFVLVIFLGSFYLINLILA) threads the bilayer. Over 423–759 (VVAMAYEEQN…HLVNLVVMDP (337 aa)) the chain is Cytoplasmic. Residues Ser-468, Ser-471, Ser-484, Ser-526, Ser-528, Ser-531, Ser-553, Ser-554, Ser-558, Ser-573, Ser-576, Ser-589, Ser-610, Ser-623, Ser-686, Ser-687, and Ser-721 each carry the phosphoserine modification. The disordered stretch occupies residues 494–529 (SSKSEKELKNRRKKKKQKEQSGEEEKNDRVRKSESE). The segment covering 511 to 529 (KEQSGEEEKNDRVRKSESE) has biased composition (basic and acidic residues). The disordered stretch occupies residues 590-610 (ENDFADDEHSTFEDNDSRRDS). The segment covering 596-610 (DEHSTFEDNDSRRDS) has biased composition (basic and acidic residues). The stretch at 741-1013 (CCKPWLKVKH…QIAVGRMQKG (273 aa)) is one II repeat. The helical transmembrane segment at 760 to 778 (FVDLAITICIVLNTLFMAM) threads the bilayer. Residues 779-789 (EHYPMTEQFSS) are Extracellular-facing. The helical transmembrane segment at 790–809 (VLSVGNLVFTGIFTAEMFLK) threads the bilayer. The Cytoplasmic portion of the chain corresponds to 810–823 (IIAMDPYYYFQEGW). Residues 824–843 (NIFDGFIVSLSLMELGLANV) traverse the membrane as a helical segment. Residues 844-845 (EG) are Extracellular-facing. Residues 846–863 (LSVLRSFRLLRVFKLAKS) form a helical membrane-spanning segment. The Cytoplasmic segment spans residues 864–879 (WPTLNMLIKIIGNSVG). The chain crosses the membrane as a helical span at residues 880–898 (ALGNLTLVLAIIVFIFAVV). The Extracellular portion of the chain corresponds to 899 to 927 (GMQLFGKSYKECVCKISNDCELPRWHMHD). A disulfide bridge connects residues Cys-912 and Cys-918. The interval 917–918 (DC) is binds SCN2B. The pore-forming intramembrane region spans 928–948 (FFHSFLIVFRVLCGEWIETMW). Over 949-961 (DCMEVAGQTMCLT) the chain is Extracellular. Cys-950 and Cys-959 are oxidised to a cystine. The helical transmembrane segment at 962–982 (VFMMVMVIGNLVVLNLFLALL) threads the bilayer. The Cytoplasmic portion of the chain corresponds to 983–1209 (LSSFSSDNLA…TCYKIVEHNW (227 aa)). The tract at residues 1120–1165 (EEFSSESDMEESKEKLNATSSSEGSTVDIGAPAEGEQPEVEPEESL) is disordered. Residues 1155 to 1165 (EQPEVEPEESL) are compositionally biased toward acidic residues. The stretch at 1190–1504 (KGKLWWNLRK…KKYYNAMKKL (315 aa)) is one III repeat. A helical membrane pass occupies residues 1210–1227 (FETFIVFMILLSSGALAF). Residues 1228 to 1240 (EDIYIEQRKTIKT) are Extracellular-facing. Residues 1241–1259 (MLEYADKVFTYIFILEMLL) traverse the membrane as a helical segment. At 1260 to 1273 (KWVAYGFQVYFTNA) the chain is on the cytoplasmic side. Residues 1274–1292 (WCWLDFLIVDVSLVSLTAN) form a helical membrane-spanning segment. Over 1293 to 1300 (ALGYSELG) the chain is Extracellular. The chain crosses the membrane as a helical span at residues 1301-1319 (AIKSLRTLRALRPLRALSR). Residues 1320 to 1336 (FEGMRVVVNALLGAIPS) are Cytoplasmic-facing. The helical transmembrane segment at 1337-1356 (IMNVLLVCLIFWLIFSIMGV) threads the bilayer. At 1357–1408 (NLFAGKFYHCINYTTGEMFDVSVVNNYSECKALIESNQTARWKNVKVNFDNV) the chain is on the extracellular side. Cys-1366 and Cys-1386 form a disulfide bridge. 3 N-linked (GlcNAc...) asparagine glycosylation sites follow: Asn-1368, Asn-1382, and Asn-1393. The pore-forming intramembrane region spans 1409 to 1430 (GLGYLSLLQVATFKGWMDIMYA). Residues 1431–1447 (AVDSRNVELQPKYEDNL) are Extracellular-facing. A helical membrane pass occupies residues 1448–1469 (YMYLYFVIFIIFGSFFTLNLFI). The Cytoplasmic segment spans residues 1470-1532 (GVIIDNFNQQ…MVFDFVTKQV (63 aa)). Ser-1506 bears the Phosphoserine; by PKC mark. The stretch at 1513–1811 (IPRPANKFQG…WEKFDPDATQ (299 aa)) is one IV repeat. The chain crosses the membrane as a helical span at residues 1533 to 1550 (FDISIMILICLNMVTMMV). At 1551–1561 (ETDDQSQEMTN) the chain is on the extracellular side. The chain crosses the membrane as a helical span at residues 1562–1580 (ILYWINLVFIVLFTGECVL). Residues 1581–1592 (KLISLRYYYFTI) lie on the Cytoplasmic side of the membrane. Residues 1593–1610 (GWNIFDFVVVILSIVGMF) traverse the membrane as a helical segment. Residues 1611-1623 (LAELIEKYFVSPT) are Extracellular-facing. The helical transmembrane segment at 1624–1640 (LFRVIRLARIGRILRLI) threads the bilayer. The Cytoplasmic portion of the chain corresponds to 1641 to 1659 (KGAKGIRTLLFALMMSLPA). A helical transmembrane segment spans residues 1660 to 1677 (LFNIGLLLFLVMFIYAIF). The Extracellular portion of the chain corresponds to 1678–1699 (GMSNFAYVKREVGIDDMFNFET). An intramembrane region (pore-forming) is located at residues 1700–1722 (FGNSMICLFQITTSAGWDGLLAP). The Extracellular segment spans residues 1723–1752 (ILNSGPPDCDPDKDHPGSSVKGDCGNPSVG). An intrachain disulfide couples Cys-1731 to Cys-1746. Residues 1753–1775 (IFFFVSYIIISFLVVVNMYIAVI) form a helical membrane-spanning segment. At 1776-2005 (LENFSVATEE…KGKDIRESKK (230 aa)) the chain is on the cytoplasmic side. Residues 1905-1934 (EEVSAIIIQRAYRRYLLKQKVKKVSSIYKK) enclose the IQ domain. Ser-1930 carries the phosphoserine modification. The span at 1935 to 1964 (DKGKECDGTPIKEDTLIDKLNENSTPEKTD) shows a compositional bias: basic and acidic residues. Residues 1935 to 2005 (DKGKECDGTP…KGKDIRESKK (71 aa)) form a disordered region. 3 positions are modified to phosphothreonine: Thr-1943, Thr-1963, and Thr-1966. Ser-1971 is subject to Phosphoserine. Basic and acidic residues predominate over residues 1979-2005 (TKPEKEKFEKDKSEKEDKGKDIRESKK).

It belongs to the sodium channel (TC 1.A.1.10) family. Nav1.2/SCN2A subfamily. In terms of assembly, heterooligomer of a large alpha subunit and a smaller beta subunit. Heterooligomer with SCN2B or SCN4B; disulfide-linked. Heterooligomer with SCN1B or SCN3B; non-covalently linked. Interacts with NEDD4L. Interacts with CALM. Interacts with TMEM233. Interacts with the conotoxin GVIIJ. Interacts with the spider beta/delta-theraphotoxin-Pre1a. Interacts with the conotoxin KIIIA. Interacts with the spider protoxin-II. Post-translationally, may be ubiquitinated by NEDD4L; which would promote its endocytosis. Phosphorylation at Ser-1506 by PKC in a highly conserved cytoplasmic loop slows inactivation of the sodium channel and reduces peak sodium currents. In terms of processing, sumoylated at Lys-38. Sumoylation is induced by hypoxia, increases voltage-gated sodium current and mediates the early response to acute hypoxia in neurons. Sumoylated SCN2A is located at the cell membrane.

It is found in the cell membrane. It carries out the reaction Na(+)(in) = Na(+)(out). Mediates the voltage-dependent sodium ion permeability of excitable membranes. Assuming opened or closed conformations in response to the voltage difference across the membrane, the protein forms a sodium-selective channel through which Na(+) ions may pass in accordance with their electrochemical gradient. Implicated in the regulation of hippocampal replay occurring within sharp wave ripples (SPW-R) important for memory. In Homo sapiens (Human), this protein is Sodium channel protein type 2 subunit alpha.